We begin with the raw amino-acid sequence, 274 residues long: MAIVKCKPTSPGRRFVVKVVNQELHKGAPHAPLLEKKSKSGGRNNNGRITTRHIGGGHKQHYRLVDFRRNDKDGIAATVERIEYDPNRTAHIALLLYADGERRYIIAPKGVSAGDQLIAGALAPIKPGNALQLRNIPVGSTVHGIELKPGKGAQIARSAGASAQLIAREGVYVTLRLRSGEMRKVLSECRATLGEVSNSEHSLRSLGKAGAKRWRGVRPTVRGVAMNPVDHPHGGGEGRTSGGRHPVSPWGFPTKGAKTRGNKRTDKMIVRRRK.

Disordered stretches follow at residues 28–54 and 224–274; these read APHA…TRHI and VAMN…RRRK. The segment covering 263–274 has biased composition (basic and acidic residues); it reads KRTDKMIVRRRK.

It belongs to the universal ribosomal protein uL2 family. Part of the 50S ribosomal subunit. Forms a bridge to the 30S subunit in the 70S ribosome.

In terms of biological role, one of the primary rRNA binding proteins. Required for association of the 30S and 50S subunits to form the 70S ribosome, for tRNA binding and peptide bond formation. It has been suggested to have peptidyltransferase activity; this is somewhat controversial. Makes several contacts with the 16S rRNA in the 70S ribosome. The sequence is that of Large ribosomal subunit protein uL2 from Pseudomonas savastanoi pv. phaseolicola (strain 1448A / Race 6) (Pseudomonas syringae pv. phaseolicola (strain 1448A / Race 6)).